Consider the following 136-residue polypeptide: Cytochrome c oxidase subunit 13, mitochondrial (136 aa).

The N-terminal 29 residues, 1–29 (MFAQRQMFFARLAANLRAPAVRQTVQRRF), are a transit peptide targeting the mitochondrion. Residues 30-62 (ASTPANESGKNAFVREREAVKQHAAETTELWRK) are Mitochondrial matrix-facing. The helical transmembrane segment at 63 to 83 (ISLYGIPPALALAGYNAYTLY) threads the bilayer. Topologically, residues 84–136 (NEHWEHWSHLPPLEERTEYPYQNIRTRNYPWGDGDKTLFWNESVNYHNRDKVT) are mitochondrial intermembrane.

This sequence belongs to the cytochrome c oxidase subunit 6A family. As to quaternary structure, component of the cytochrome c oxidase (complex IV, CIV), a multisubunit enzyme composed of 11 subunits. The complex is composed of a catalytic core of 3 subunits Cox1, Cox2 and Cox3, encoded in the mitochondrial DNA, and 8 supernumerary subunits Cox4, Cox5a/Cox5, Cox6, Cox7, Cox8, Cox7a/Cox9, Cox6b/Cox12 and Cox6a/Cox13, which are encoded in the nuclear genome. The complex exists as a monomer or a dimer and forms respiratory supercomplexes (SCs) in the inner mitochondrial membrane with NADH-ubiquinone oxidoreductase (complex I, CI) and ubiquinol-cytochrome c oxidoreductase (cytochrome b-c1 complex, complex III, CIII), resulting in various different assemblies (supercomplexes I(1)IV(1), I(1)III(3)IV(2), III(2)IV(1) and III(2)IV(2) as well as larger supercomplexes of compositions like I(1)III(2)IV(5-6)). Cox6a/Cox13 was not present in the cryo-EM structure. It may be involved in complex IV dimer formation and might not be always expressed. This would explain its absence in the map of the isolated monomer.

The protein resides in the mitochondrion inner membrane. Its pathway is energy metabolism; oxidative phosphorylation. In terms of biological role, component of the cytochrome c oxidase, the last enzyme in the mitochondrial electron transport chain which drives oxidative phosphorylation. The respiratory chain contains 3 multisubunit complexes succinate dehydrogenase (complex II, CII), ubiquinol-cytochrome c oxidoreductase (cytochrome b-c1 complex, complex III, CIII) and cytochrome c oxidase (complex IV, CIV), that cooperate to transfer electrons derived from NADH and succinate to molecular oxygen, creating an electrochemical gradient over the inner membrane that drives transmembrane transport and the ATP synthase. Cytochrome c oxidase is the component of the respiratory chain that catalyzes the reduction of oxygen to water. Electrons originating from reduced cytochrome c in the intermembrane space (IMS) are transferred via the dinuclear copper A center (CU(A)) of Cox2 and heme A of Cox1 to the active site in Cox1, a binuclear center (BNC) formed by heme A3 and copper B (CU(B)). The BNC reduces molecular oxygen to 2 water molecules using 4 electrons from cytochrome c in the IMS and 4 protons from the mitochondrial matrix. This chain is Cytochrome c oxidase subunit 13, mitochondrial (eat-5), found in Neurospora crassa (strain ATCC 24698 / 74-OR23-1A / CBS 708.71 / DSM 1257 / FGSC 987).